The primary structure comprises 343 residues: L-rhamnose-proton symporter (343 aa).

10 helical membrane-spanning segments follow: residues 4–24, 38–58, 68–88, 101–121, 137–157, 175–195, 207–227, 254–274, 289–309, and 320–340; these read AIIL…CFYA, WSIG…YLLL, FSIA…IGNI, MGIG…TPIL, TLLG…AGLL, LILA…MDAA, INSL…GAII, LLIT…LQFF, MSWM…GLLL, and VAVL…VGLG.

This sequence belongs to the L-rhamnose transporter (TC 2.A.7.6) family.

It is found in the cell inner membrane. It catalyses the reaction L-rhamnopyranose(in) + H(+)(in) = L-rhamnopyranose(out) + H(+)(out). Functionally, uptake of L-rhamnose across the cytoplasmic membrane with the concomitant transport of protons into the cell (symport system). This chain is L-rhamnose-proton symporter, found in Yersinia pestis bv. Antiqua (strain Antiqua).